Consider the following 270-residue polypeptide: Orotidine 5'-phosphate decarboxylase (270 aa).

The Proton donor role is filled by lysine 89.

It belongs to the OMP decarboxylase family. Type 2 subfamily.

It carries out the reaction orotidine 5'-phosphate + H(+) = UMP + CO2. It functions in the pathway pyrimidine metabolism; UMP biosynthesis via de novo pathway; UMP from orotate: step 2/2. This is Orotidine 5'-phosphate decarboxylase from Dehalococcoides mccartyi (strain CBDB1).